Here is a 95-residue protein sequence, read N- to C-terminus: Antitoxin VapB (95 aa).

Functionally, antitoxin component of a type II toxin-antitoxin (TA) system. Partially neutralizes the RNase activity of cognate toxin VapC. This Rickettsia bellii (strain RML369-C) protein is Antitoxin VapB.